Reading from the N-terminus, the 318-residue chain is Energy-coupling factor transporter ATP-binding protein EcfA2 (318 aa).

An ABC transporter domain is found at 22–271 (LRAQGLKCVF…PEIMQTTSIA (250 aa)). ATP is bound at residue 59-66 (GNSGSGKS).

It belongs to the ABC transporter superfamily. Energy-coupling factor EcfA family. In terms of assembly, forms a stable energy-coupling factor (ECF) transporter complex composed of 2 membrane-embedded substrate-binding proteins (S component), 2 ATP-binding proteins (A component) and 2 transmembrane proteins (T component).

It localises to the cell membrane. In terms of biological role, ATP-binding (A) component of a common energy-coupling factor (ECF) ABC-transporter complex. Unlike classic ABC transporters this ECF transporter provides the energy necessary to transport a number of different substrates. The protein is Energy-coupling factor transporter ATP-binding protein EcfA2 of Mycoplasmoides gallisepticum (strain R(low / passage 15 / clone 2)) (Mycoplasma gallisepticum).